The following is a 320-amino-acid chain: 3'-5' exoribonuclease YhaM (320 aa).

The segment at residues 18–90 (FLIKSATKAV…QLKIGSIRPT (73 aa)) is a DNA-binding region (OB). Positions 163 to 279 (HVVCMLNVAK…LHMIDNIDAK (117 aa)) constitute an HD domain.

The protein belongs to the YhaM family.

Its function is as follows. Shows a 3'-5' exoribonuclease activity. This Halalkalibacterium halodurans (strain ATCC BAA-125 / DSM 18197 / FERM 7344 / JCM 9153 / C-125) (Bacillus halodurans) protein is 3'-5' exoribonuclease YhaM.